We begin with the raw amino-acid sequence, 146 residues long: Gonadotropin subunit beta-2 (146 aa).

Residues 1-22 (MTVEISKVFVLMMLNLFLGASS) form the signal peptide. Intrachain disulfides connect cysteine 37/cysteine 85, cysteine 51/cysteine 100, cysteine 54/cysteine 138, cysteine 62/cysteine 116, cysteine 66/cysteine 118, and cysteine 121/cysteine 128. N-linked (GlcNAc...) asparagine glycosylation occurs at asparagine 41.

Belongs to the glycoprotein hormones subunit beta family. In terms of assembly, heterodimer of an alpha and a beta chain.

Its subcellular location is the secreted. Functionally, involved in gametogenesis and steroidogenesis. In Trichopodus trichopterus (Three spot gourami), this protein is Gonadotropin subunit beta-2 (cgbb).